A 44-amino-acid polypeptide reads, in one-letter code: Antibacterial protein 3 homolog (44 aa).

The protein belongs to the staphylococcal hemolytic protein family.

It localises to the secreted. Its function is as follows. Has hemolytic activity and also inhibits the growth of gonococci. The protein is Antibacterial protein 3 homolog of Staphylococcus haemolyticus (strain JCSC1435).